A 338-amino-acid polypeptide reads, in one-letter code: Putative transport protein TM_1349 (338 aa).

Transmembrane regions (helical) follow at residues 20-40, 68-88, 147-167, 203-223, 239-259, 263-283, and 297-317; these read ILIS…IVLM, ALLL…PPVF, VSVT…VFYI, VIFI…EAFN, FIPI…SLTL, GVLL…VVFI, and IILS…FVGV.

The protein belongs to the autoinducer-2 exporter (AI-2E) (TC 2.A.86) family.

The protein resides in the cell membrane. This Thermotoga maritima (strain ATCC 43589 / DSM 3109 / JCM 10099 / NBRC 100826 / MSB8) protein is Putative transport protein TM_1349.